A 79-amino-acid chain; its full sequence is Small ribosomal subunit protein bS18 (79 aa).

This sequence belongs to the bacterial ribosomal protein bS18 family. As to quaternary structure, part of the 30S ribosomal subunit. Forms a tight heterodimer with protein bS6.

In terms of biological role, binds as a heterodimer with protein bS6 to the central domain of the 16S rRNA, where it helps stabilize the platform of the 30S subunit. The protein is Small ribosomal subunit protein bS18 of Listeria innocua serovar 6a (strain ATCC BAA-680 / CLIP 11262).